Here is a 432-residue protein sequence, read N- to C-terminus: MSNEQMIDIKGPLIGEIEVPGDKSMTHRAIMLASLATGQSTIYKPLLGEDCLRTIEIFKLLGVNIELAEEKIIVDSPGYNKFKTPHQTLYTGNSGTTTRLLAGLLSGLNLNCVLSGDASIGKRPMDRVMKPLRLMGANITGIDDNFTPLIIKPASINGITYKMEVASAQVKSALLFASLFSNDSSKITELDVSRNHTETMFEQFNIPISISGKEITTQPNAIEHIKAKDFYVPGDISSAAFFIVAALITPGSDITIHNVGINPTRSGIIDIVKQMEGNIECLNITDTSEPTASIRVKYTPNLKPVLIEGDIVPKAIDELPIIALLCTQASGTSIIKDAEELKVKETNRIDTTADMLGLLGFELQPTDDGLIIHPSEFKKSATVDSLTDHRIGMMLAIASLLSDKPLNIRQFDAVNVSFPGFLPKLMLLENEG.

The 3-phosphoshikimate site is built by Lys23, Ser24, and Arg28. Position 23 (Lys23) interacts with phosphoenolpyruvate. The phosphoenolpyruvate site is built by Gly95 and Arg123. The 3-phosphoshikimate site is built by Ser167, Gln169, Asp317, and Lys344. Gln169 contacts phosphoenolpyruvate. The active-site Proton acceptor is Asp317. Residues Arg348 and Arg390 each contribute to the phosphoenolpyruvate site.

This sequence belongs to the EPSP synthase family. As to quaternary structure, monomer.

The protein resides in the cytoplasm. The enzyme catalyses 3-phosphoshikimate + phosphoenolpyruvate = 5-O-(1-carboxyvinyl)-3-phosphoshikimate + phosphate. It functions in the pathway metabolic intermediate biosynthesis; chorismate biosynthesis; chorismate from D-erythrose 4-phosphate and phosphoenolpyruvate: step 6/7. Functionally, catalyzes the transfer of the enolpyruvyl moiety of phosphoenolpyruvate (PEP) to the 5-hydroxyl of shikimate-3-phosphate (S3P) to produce enolpyruvyl shikimate-3-phosphate and inorganic phosphate. This Staphylococcus haemolyticus (strain JCSC1435) protein is 3-phosphoshikimate 1-carboxyvinyltransferase.